We begin with the raw amino-acid sequence, 516 residues long: Cysteine--tRNA ligase (516 aa).

Cys32 provides a ligand contact to Zn(2+). The 'HIGH' region motif lies at 34–44 (PTVYMYAHIGN). Zn(2+) contacts are provided by Cys230, His255, and Glu259. The 'KMSKS' region signature appears at 287–291 (KMSKS). Lys290 lines the ATP pocket.

Belongs to the class-I aminoacyl-tRNA synthetase family. Monomer. Requires Zn(2+) as cofactor.

It is found in the cytoplasm. The catalysed reaction is tRNA(Cys) + L-cysteine + ATP = L-cysteinyl-tRNA(Cys) + AMP + diphosphate. The polypeptide is Cysteine--tRNA ligase (Salinibacter ruber (strain DSM 13855 / M31)).